The chain runs to 252 residues: Chitooligosaccharide deacetylase (252 aa).

Mg(2+) contacts are provided by His-61 and His-125.

It belongs to the YdjC deacetylase family. ChbG subfamily. Homodimer. Requires Mg(2+) as cofactor.

The protein resides in the cytoplasm. It catalyses the reaction N,N'-diacetylchitobiose + H2O = N-acetyl-beta-D-glucosaminyl-(1-&gt;4)-D-glucosamine + acetate. It carries out the reaction diacetylchitobiose-6'-phosphate + H2O = N'-monoacetylchitobiose-6'-phosphate + acetate. It participates in glycan degradation; chitin degradation. Functionally, involved in the degradation of chitin. ChbG is essential for growth on the acetylated chitooligosaccharides chitobiose and chitotriose but is dispensable for growth on cellobiose and chitosan dimer, the deacetylated form of chitobiose. Deacetylation of chitobiose-6-P and chitotriose-6-P is necessary for both the activation of the chb promoter by the regulatory protein ChbR and the hydrolysis of phosphorylated beta-glucosides by the phospho-beta-glucosidase ChbF. Catalyzes the removal of only one acetyl group from chitobiose-6-P to yield monoacetylchitobiose-6-P, the inducer of ChbR and the substrate of ChbF. The chain is Chitooligosaccharide deacetylase from Salmonella typhi.